The chain runs to 236 residues: LexA repressor (236 aa).

The H-T-H motif DNA-binding region spans 26–46 (FDEMKDALDLRSKSGIHRLII). Catalysis depends on for autocatalytic cleavage activity residues Ser157 and Lys195.

It belongs to the peptidase S24 family. Homodimer.

It carries out the reaction Hydrolysis of Ala-|-Gly bond in repressor LexA.. In terms of biological role, represses a number of genes involved in the response to DNA damage (SOS response), including recA and lexA. In the presence of single-stranded DNA, RecA interacts with LexA causing an autocatalytic cleavage which disrupts the DNA-binding part of LexA, leading to derepression of the SOS regulon and eventually DNA repair. The protein is LexA repressor of Methylocella silvestris (strain DSM 15510 / CIP 108128 / LMG 27833 / NCIMB 13906 / BL2).